The sequence spans 270 residues: Hairy and enhancer of split-related protein helt (270 aa).

Residues 1 to 24 (MNARALYKRPPPVSSSQSEASGKR) are disordered. Positions 59–114 (KTPVSHKVIEKRRRDRINRCLNELGKTVPMALAKQNSGKLEKAEILEMTVQYLRAL) constitute a bHLH domain. One can recognise an Orange domain in the interval 136–171 (FHYGYHECMKNLVHYLTTVERMETKDTKYARILAFL).

This sequence belongs to the HEY family.

It localises to the nucleus. Transcriptional repressor which binds preferentially to the canonical E box sequence 5'-CACGCG-3'. The polypeptide is Hairy and enhancer of split-related protein helt (helt) (Danio rerio (Zebrafish)).